Here is a 384-residue protein sequence, read N- to C-terminus: FAD-dependent urate hydroxylase (384 aa).

Residues G11, 30–31 (EA), S43, and V125 contribute to the FAD site. Residues N178, R204, and 216 to 218 (YFF) each bind substrate. FAD contacts are provided by residues D285 and 295–299 (GQGGC).

This sequence belongs to the FAD-dependent urate hydroxylase family. Requires FAD as cofactor.

The catalysed reaction is urate + NADH + O2 + H(+) = 5-hydroxyisourate + NAD(+) + H2O. The protein operates within purine metabolism; urate degradation. Functionally, catalyzes the hydroxylation of uric acid to 5-hydroxyisourate. The sequence is that of FAD-dependent urate hydroxylase (hpxO) from Klebsiella pneumoniae.